The following is a 257-amino-acid chain: Zinc transporter ZupT (257 aa).

Transmembrane regions (helical) follow at residues Leu5–Gly25, Leu32–Met52, and Gly61–Leu81. Fe(2+) contacts are provided by Asn120 and Glu123. 2 residues coordinate Zn(2+): Glu123 and His148. 4 consecutive transmembrane segments (helical) span residues Leu137–Ala157, Ile171–Ile191, Met195–Leu215, and Gly236–Ile256. The Fe(2+) site is built by Asn149, Glu152, and Glu181. Glu152 contributes to the Zn(2+) binding site.

It belongs to the ZIP transporter (TC 2.A.5) family. ZupT subfamily.

It is found in the cell inner membrane. It catalyses the reaction Zn(2+)(in) = Zn(2+)(out). Mediates zinc uptake. May also transport other divalent cations. This is Zinc transporter ZupT from Escherichia coli O127:H6 (strain E2348/69 / EPEC).